The sequence spans 264 residues: Thymidylate synthase (264 aa).

DUMP contacts are provided by residues R21 and 126–127; that span reads RR. The active-site Nucleophile is the C146. DUMP is bound by residues 166–169, N177, and 207–209; these read RSAD and HLY. D169 lines the (6R)-5,10-methylene-5,6,7,8-tetrahydrofolate pocket. A263 provides a ligand contact to (6R)-5,10-methylene-5,6,7,8-tetrahydrofolate.

This sequence belongs to the thymidylate synthase family. Bacterial-type ThyA subfamily. In terms of assembly, homodimer.

The protein resides in the cytoplasm. It carries out the reaction dUMP + (6R)-5,10-methylene-5,6,7,8-tetrahydrofolate = 7,8-dihydrofolate + dTMP. It participates in pyrimidine metabolism; dTTP biosynthesis. Catalyzes the reductive methylation of 2'-deoxyuridine-5'-monophosphate (dUMP) to 2'-deoxythymidine-5'-monophosphate (dTMP) while utilizing 5,10-methylenetetrahydrofolate (mTHF) as the methyl donor and reductant in the reaction, yielding dihydrofolate (DHF) as a by-product. This enzymatic reaction provides an intracellular de novo source of dTMP, an essential precursor for DNA biosynthesis. This chain is Thymidylate synthase, found in Halorhodospira halophila (strain DSM 244 / SL1) (Ectothiorhodospira halophila (strain DSM 244 / SL1)).